The following is a 252-amino-acid chain: Flagellar brake protein YcgR (252 aa).

The region spanning 118-236 (QRREYFRVSI…EKGLQRAIFE (119 aa)) is the PilZ domain.

It belongs to the YcgR family. In terms of assembly, monomer. Interacts with the flagellar basal bodies.

It is found in the bacterial flagellum basal body. Functionally, acts as a flagellar brake, regulating swimming and swarming in a bis-(3'-5') cyclic diguanylic acid (c-di-GMP)-dependent manner. Binds 1 c-di-GMP dimer per subunit. Increasing levels of c-di-GMP lead to decreased motility. This Yersinia pseudotuberculosis serotype I (strain IP32953) protein is Flagellar brake protein YcgR.